Here is a 485-residue protein sequence, read N- to C-terminus: MPIGAWSDALRNGSATAKEHSEQALERIAATEPELKAFVNVTGDQARAQAEAVDQAIAAKQDPGPLAGVTIGIKDNLCTKGVTTTCSSRMLENFVPPYESTVTERLWKAGAVMVGKTNLDEFAMGSSTETSAFGMTSNPWDPGRVPGGSSGGSAACVAAGQCDVALGSDTGGSIRQPASFCGVVGLKPTYGRVSRWGLVAFASSLDQIGPFSRTVADSAAVLQVIAGHDPRDSTSLDVPVPDYSAALNRPIQGLKIGILQEAFVEGLQPEVEASVRAAAEQLASLGCELVDVSCPRFQAGIATYYVIAPSEASANLARYDGVKYGYRAADAESLSAMTAKSRAEGFGDEVQRRILIGTYALSAGYVDAYYKKAQQVRTLIRQEFDRAFEQVDLLLTPTAPTTAFTPGEHSNDPLAMYLADLLTIPANLAGLPAISVPCGFDGQGLPIGLQLMAPVLQEERLLQVAHHYEQAADVMANRPEAPLVA.

Catalysis depends on charge relay system residues K74 and S149. S173 (acyl-ester intermediate) is an active-site residue.

Belongs to the amidase family. GatA subfamily. In terms of assembly, heterotrimer of A, B and C subunits.

The enzyme catalyses L-glutamyl-tRNA(Gln) + L-glutamine + ATP + H2O = L-glutaminyl-tRNA(Gln) + L-glutamate + ADP + phosphate + H(+). In terms of biological role, allows the formation of correctly charged Gln-tRNA(Gln) through the transamidation of misacylated Glu-tRNA(Gln) in organisms which lack glutaminyl-tRNA synthetase. The reaction takes place in the presence of glutamine and ATP through an activated gamma-phospho-Glu-tRNA(Gln). This Synechococcus sp. (strain RCC307) protein is Glutamyl-tRNA(Gln) amidotransferase subunit A.